Here is a 126-residue protein sequence, read N- to C-terminus: UPF0102 protein BH12350 (126 aa).

This sequence belongs to the UPF0102 family.

The protein is UPF0102 protein BH12350 of Bartonella henselae (strain ATCC 49882 / DSM 28221 / CCUG 30454 / Houston 1) (Rochalimaea henselae).